A 1030-amino-acid polypeptide reads, in one-letter code: Carbamoyl phosphate synthase arginine-specific large chain (1030 aa).

The tract at residues 1 to 401 (MPKDTSISSI…AIQKAAASLE (401 aa)) is carboxyphosphate synthetic domain. Residues R129, R169, G175, G176, K208, I210, E215, G241, V242, H243, Q284, and E298 each coordinate ATP. The region spanning 133–327 (RSLMNELKQP…IAKMAAKLAV (195 aa)) is the ATP-grasp 1 domain. Q284, E298, and N300 together coordinate Mg(2+). Mn(2+)-binding residues include Q284, E298, and N300. The oligomerization domain stretch occupies residues 402 to 548 (LKNIGTHLPE…YSTYFGETDG (147 aa)). The tract at residues 549 to 928 (DISRKEKKRA…ALKKIYTRVW (380 aa)) is carbamoyl phosphate synthetic domain. Residues 675 to 863 (YQLLDELGLK…MIPLATRLLA (189 aa)) enclose the ATP-grasp 2 domain. Residues R711, Q748, V750, E754, G779, V780, H781, S782, Q822, and E834 each contribute to the ATP site. Residues Q822, E834, and N836 each coordinate Mg(2+). Mn(2+) is bound by residues Q822, E834, and N836. In terms of domain architecture, MGS-like spans 925-1027 (TRVWSQKGSI…KDLYKKEVAS (103 aa)). The allosteric domain stretch occupies residues 929-1030 (SQKGSIYLQN…YKKEVASCTQ (102 aa)).

Belongs to the CarB family. In terms of assembly, composed of two chains; the small (or glutamine) chain promotes the hydrolysis of glutamine to ammonia, which is used by the large (or ammonia) chain to synthesize carbamoyl phosphate. Tetramer of heterodimers (alpha,beta)4. Requires Mg(2+) as cofactor. Mn(2+) serves as cofactor.

The catalysed reaction is hydrogencarbonate + L-glutamine + 2 ATP + H2O = carbamoyl phosphate + L-glutamate + 2 ADP + phosphate + 2 H(+). The enzyme catalyses hydrogencarbonate + NH4(+) + 2 ATP = carbamoyl phosphate + 2 ADP + phosphate + 2 H(+). Its pathway is amino-acid biosynthesis; L-arginine biosynthesis; carbamoyl phosphate from bicarbonate: step 1/1. Its function is as follows. Large subunit of the glutamine-dependent carbamoyl phosphate synthetase (CPSase). CPSase catalyzes the formation of carbamoyl phosphate from the ammonia moiety of glutamine, carbonate, and phosphate donated by ATP, constituting the first step of the biosynthetic pathway leading to arginine and/or urea. The large subunit (synthetase) binds the substrates ammonia (free or transferred from glutamine from the small subunit), hydrogencarbonate and ATP and carries out an ATP-coupled ligase reaction, activating hydrogencarbonate by forming carboxy phosphate which reacts with ammonia to form carbamoyl phosphate. This Bacillus subtilis (strain 168) protein is Carbamoyl phosphate synthase arginine-specific large chain.